A 505-amino-acid polypeptide reads, in one-letter code: Aspartyl/glutamyl-tRNA(Asn/Gln) amidotransferase subunit B (505 aa).

Belongs to the GatB/GatE family. GatB subfamily. As to quaternary structure, heterotrimer of A, B and C subunits.

The enzyme catalyses L-glutamyl-tRNA(Gln) + L-glutamine + ATP + H2O = L-glutaminyl-tRNA(Gln) + L-glutamate + ADP + phosphate + H(+). It carries out the reaction L-aspartyl-tRNA(Asn) + L-glutamine + ATP + H2O = L-asparaginyl-tRNA(Asn) + L-glutamate + ADP + phosphate + 2 H(+). In terms of biological role, allows the formation of correctly charged Asn-tRNA(Asn) or Gln-tRNA(Gln) through the transamidation of misacylated Asp-tRNA(Asn) or Glu-tRNA(Gln) in organisms which lack either or both of asparaginyl-tRNA or glutaminyl-tRNA synthetases. The reaction takes place in the presence of glutamine and ATP through an activated phospho-Asp-tRNA(Asn) or phospho-Glu-tRNA(Gln). This is Aspartyl/glutamyl-tRNA(Asn/Gln) amidotransferase subunit B from Corynebacterium jeikeium (strain K411).